The primary structure comprises 71 residues: Gas vesicle protein A (71 aa).

This sequence belongs to the gas vesicle GvpA family. As to quaternary structure, the gas vesicle shell is 2 nm thick and consists of a single layer of this protein. It forms helical ribs nearly perpendicular to the long axis of the vesicle.

It localises to the gas vesicle shell. Functionally, gas vesicles are hollow, gas filled proteinaceous nanostructures found in some microorganisms. During planktonic growth they allow positioning of the organism at a favorable depth for light or nutrient acquisition. GvpA forms the protein shell. Its function is as follows. Cluster expression in E.coli (gvpA1-gvpA2-gvpC-gvpN-gvpJ-gvpK-gvpF-gvpG-gvpV-gvpW) allows cells to float and produces irregularly shaped gas vesicles. This is Gas vesicle protein A from Nostoc sp. (strain PCC 7120 / SAG 25.82 / UTEX 2576).